The sequence spans 89 residues: Small ribosomal subunit protein uS15 (89 aa).

It belongs to the universal ribosomal protein uS15 family. Part of the 30S ribosomal subunit. Forms a bridge to the 50S subunit in the 70S ribosome, contacting the 23S rRNA.

Functionally, one of the primary rRNA binding proteins, it binds directly to 16S rRNA where it helps nucleate assembly of the platform of the 30S subunit by binding and bridging several RNA helices of the 16S rRNA. Its function is as follows. Forms an intersubunit bridge (bridge B4) with the 23S rRNA of the 50S subunit in the ribosome. The polypeptide is Small ribosomal subunit protein uS15 (Gloeobacter violaceus (strain ATCC 29082 / PCC 7421)).